The primary structure comprises 172 residues: Shikimate kinase (172 aa).

Gly-11–Thr-16 serves as a coordination point for ATP. Residue Ser-15 coordinates Mg(2+). The substrate site is built by Asp-33, Arg-57, and Gly-79. Position 117 (Arg-117) interacts with ATP. Arg-136 contacts substrate. Arg-153 lines the ATP pocket.

Belongs to the shikimate kinase family. Monomer. It depends on Mg(2+) as a cofactor.

The protein localises to the cytoplasm. The enzyme catalyses shikimate + ATP = 3-phosphoshikimate + ADP + H(+). The protein operates within metabolic intermediate biosynthesis; chorismate biosynthesis; chorismate from D-erythrose 4-phosphate and phosphoenolpyruvate: step 5/7. Functionally, catalyzes the specific phosphorylation of the 3-hydroxyl group of shikimic acid using ATP as a cosubstrate. The chain is Shikimate kinase from Pseudomonas entomophila (strain L48).